Here is a 916-residue protein sequence, read N- to C-terminus: Calcium homeostasis endoplasmic reticulum protein (916 aa).

Position 1 is an N-acetylmethionine (methionine 1). The stretch at valine 15–lysine 57 is one SURP motif repeat. The residue at position 18 (lysine 18) is an N6-acetyllysine. One can recognise a CID domain in the interval glutamate 149–glycine 289. 2 disordered regions span residues glutamine 336 to proline 549 and histidine 601 to asparagine 635. Pro residues predominate over residues threonine 354–threonine 374. Over residues tryptophan 480–glutamate 501 the composition is skewed to polar residues. Positions proline 525–proline 541 are enriched in pro residues. Tyrosine 714 bears the Phosphotyrosine mark. The interval arginine 722–aspartate 878 is disordered. Residues serine 739–serine 749 show a composition bias toward basic residues. Over residues serine 750–arginine 766 the composition is skewed to low complexity. A compositionally biased stretch (basic residues) spans serine 767–serine 815. Residues serine 813, serine 815, and serine 817 each carry the phosphoserine modification. Threonine 819 carries the phosphothreonine modification. Serine 828 carries the phosphoserine modification. Residues glutamate 841–aspartate 891 form the G-patch domain. Residue lysine 844 forms a Glycyl lysine isopeptide (Lys-Gly) (interchain with G-Cter in SUMO2) linkage. Phosphoserine is present on residues serine 855 and serine 857. Lysine 872 is covalently cross-linked (Glycyl lysine isopeptide (Lys-Gly) (interchain with G-Cter in SUMO2)). An N6-acetyllysine modification is found at lysine 879. The residue at position 904 (serine 904) is a Phosphoserine.

Expressed in brain, placenta, lung, liver, kidney, pancreas, cardiac and skeletal muscle, and in cultured HEL and Dami cells.

The protein localises to the cytoplasm. Its subcellular location is the perinuclear region. It is found in the endoplasmic reticulum. Its function is as follows. Involved in calcium homeostasis, growth and proliferation. The protein is Calcium homeostasis endoplasmic reticulum protein of Homo sapiens (Human).